Here is a 698-residue protein sequence, read N- to C-terminus: Elongation factor G (698 aa).

Residues 10-285 enclose the tr-type G domain; that stretch reads AATRNIGIMA…AVVDFLPSPT (276 aa). Residues 19–26, 83–87, and 137–140 each bind GTP; these read AHIDAGKT, DTPGH, and NKMD.

It belongs to the TRAFAC class translation factor GTPase superfamily. Classic translation factor GTPase family. EF-G/EF-2 subfamily.

The protein resides in the cytoplasm. Its function is as follows. Catalyzes the GTP-dependent ribosomal translocation step during translation elongation. During this step, the ribosome changes from the pre-translocational (PRE) to the post-translocational (POST) state as the newly formed A-site-bound peptidyl-tRNA and P-site-bound deacylated tRNA move to the P and E sites, respectively. Catalyzes the coordinated movement of the two tRNA molecules, the mRNA and conformational changes in the ribosome. The sequence is that of Elongation factor G from Parafrankia sp. (strain EAN1pec).